The sequence spans 446 residues: Tubulin beta-2 chain (446 aa).

Glutamine 11, glutamate 69, serine 138, glycine 142, threonine 143, glycine 144, asparagine 204, and asparagine 226 together coordinate GTP. Residue glutamate 69 coordinates Mg(2+). The segment at 424-446 (QYQEATADEEGEFDEDEEGGGDE) is disordered. Positions 429 to 446 (TADEEGEFDEDEEGGGDE) are enriched in acidic residues.

The protein belongs to the tubulin family. Dimer of alpha and beta chains. A typical microtubule is a hollow water-filled tube with an outer diameter of 25 nm and an inner diameter of 15 nM. Alpha-beta heterodimers associate head-to-tail to form protofilaments running lengthwise along the microtubule wall with the beta-tubulin subunit facing the microtubule plus end conferring a structural polarity. Microtubules usually have 13 protofilaments but different protofilament numbers can be found in some organisms and specialized cells. Mg(2+) serves as cofactor. In terms of tissue distribution, testis specific.

The protein localises to the cytoplasm. The protein resides in the cytoskeleton. Functionally, tubulin is the major constituent of microtubules, a cylinder consisting of laterally associated linear protofilaments composed of alpha- and beta-tubulin heterodimers. Microtubules grow by the addition of GTP-tubulin dimers to the microtubule end, where a stabilizing cap forms. Below the cap, tubulin dimers are in GDP-bound state, owing to GTPase activity of alpha-tubulin. This Drosophila melanogaster (Fruit fly) protein is Tubulin beta-2 chain (betaTub85D).